Consider the following 701-residue polypeptide: Epithelial splicing regulatory protein 2 (701 aa).

3 consecutive RRM domains span residues 226-303 (TVIR…KATG), 327-407 (VIIR…RSTA), and 448-523 (CVRL…VEVF).

It belongs to the ESRP family.

It localises to the nucleus. Its function is as follows. mRNA splicing factor that regulates the formation of epithelial cell-specific isoforms. Specifically regulates the expression of FGFR2-IIIb, an epithelial cell-specific isoform of FGFR2. Acts by directly binding specific sequences in mRNAs. Binds the GU-rich sequence motifs in the ISE/ISS-3, a cis-element regulatory region present in the mRNA of FGFR2. The chain is Epithelial splicing regulatory protein 2 (ESRP2) from Gallus gallus (Chicken).